The following is a 201-amino-acid chain: Glycerol-3-phosphate acyltransferase (201 aa).

Helical transmembrane passes span 5 to 25 (LLGAVLVAAGYLAGSIPFGVV), 55 to 75 (KMGVLVLVLDAAKAIVPILLA), 88 to 108 (WSTAVAVAAFVGHLFPVWLGF), 118 to 138 (LGIFAVLAPWAALAGLVGYAV), and 164 to 184 (TYGVRHPVPWAGLAIALLIFL).

It belongs to the PlsY family. Probably interacts with PlsX.

It localises to the cell inner membrane. It catalyses the reaction an acyl phosphate + sn-glycerol 3-phosphate = a 1-acyl-sn-glycero-3-phosphate + phosphate. It functions in the pathway lipid metabolism; phospholipid metabolism. In terms of biological role, catalyzes the transfer of an acyl group from acyl-phosphate (acyl-PO(4)) to glycerol-3-phosphate (G3P) to form lysophosphatidic acid (LPA). This enzyme utilizes acyl-phosphate as fatty acyl donor, but not acyl-CoA or acyl-ACP. This chain is Glycerol-3-phosphate acyltransferase, found in Anaeromyxobacter dehalogenans (strain 2CP-C).